Consider the following 377-residue polypeptide: Succinyl-diaminopimelate desuccinylase (377 aa).

A Zn(2+)-binding site is contributed by His-68. Asp-70 is a catalytic residue. Asp-101 serves as a coordination point for Zn(2+). Glu-135 functions as the Proton acceptor in the catalytic mechanism. Zn(2+) is bound by residues Glu-136, Glu-164, and His-350.

Belongs to the peptidase M20A family. DapE subfamily. Homodimer. The cofactor is Zn(2+). It depends on Co(2+) as a cofactor.

The catalysed reaction is N-succinyl-(2S,6S)-2,6-diaminopimelate + H2O = (2S,6S)-2,6-diaminopimelate + succinate. Its pathway is amino-acid biosynthesis; L-lysine biosynthesis via DAP pathway; LL-2,6-diaminopimelate from (S)-tetrahydrodipicolinate (succinylase route): step 3/3. In terms of biological role, catalyzes the hydrolysis of N-succinyl-L,L-diaminopimelic acid (SDAP), forming succinate and LL-2,6-diaminopimelate (DAP), an intermediate involved in the bacterial biosynthesis of lysine and meso-diaminopimelic acid, an essential component of bacterial cell walls. The protein is Succinyl-diaminopimelate desuccinylase of Vibrio vulnificus (strain CMCP6).